Consider the following 195-residue polypeptide: Small ribosomal subunit protein uS4c (195 aa).

Positions Met-82–Asn-143 constitute an S4 RNA-binding domain.

This sequence belongs to the universal ribosomal protein uS4 family. As to quaternary structure, part of the 30S ribosomal subunit. Contacts protein S5. The interaction surface between S4 and S5 is involved in control of translational fidelity.

The protein resides in the plastid. It localises to the chloroplast. One of the primary rRNA binding proteins, it binds directly to 16S rRNA where it nucleates assembly of the body of the 30S subunit. Its function is as follows. With S5 and S12 plays an important role in translational accuracy. This is Small ribosomal subunit protein uS4c (rps4) from Pillansia templemannii.